A 533-amino-acid polypeptide reads, in one-letter code: Tyrosine decarboxylase (533 aa).

Residues M1 to E22 are disordered. Pyridoxal 5'-phosphate is bound by residues T281 and N336. An N6-(pyridoxal phosphate)lysine modification is found at K339.

This sequence belongs to the group II decarboxylase family. Pyridoxal 5'-phosphate is required as a cofactor.

It catalyses the reaction L-tyrosine + H(+) = tyramine + CO2. Its function is as follows. Catalyzes the decarboxylation of L-tyrosine to tyramine, which can be converted to the hydroxycinnamic acid amides feruloyltyramine and 4-coumaroyltyramine. Possesses low tryptophan decarboxylase activity. This Oryza sativa subsp. japonica (Rice) protein is Tyrosine decarboxylase.